Reading from the N-terminus, the 280-residue chain is 2,3,4,5-tetrahydropyridine-2,6-dicarboxylate N-succinyltransferase (280 aa).

This sequence belongs to the transferase hexapeptide repeat family.

It localises to the cytoplasm. The enzyme catalyses (S)-2,3,4,5-tetrahydrodipicolinate + succinyl-CoA + H2O = (S)-2-succinylamino-6-oxoheptanedioate + CoA. It functions in the pathway amino-acid biosynthesis; L-lysine biosynthesis via DAP pathway; LL-2,6-diaminopimelate from (S)-tetrahydrodipicolinate (succinylase route): step 1/3. This is 2,3,4,5-tetrahydropyridine-2,6-dicarboxylate N-succinyltransferase from Methylorubrum populi (strain ATCC BAA-705 / NCIMB 13946 / BJ001) (Methylobacterium populi).